The following is a 544-amino-acid chain: 4-coumarate:CoA ligase 1 (544 aa).

The protein belongs to the ATP-dependent AMP-binding enzyme family. As to quaternary structure, monomer. In terms of tissue distribution, mostly expressed in flower organs, with highest levels in corollas, and, to a lesser extent, in tubes, sepals, pistils, stamen and ovaries. Also present at low levels in leaves.

Its subcellular location is the cytoplasm. The protein resides in the cytosol. It catalyses the reaction (E)-4-coumarate + ATP + CoA = (E)-4-coumaroyl-CoA + AMP + diphosphate. The catalysed reaction is (E)-caffeate + ATP + CoA = (E)-caffeoyl-CoA + AMP + diphosphate. It carries out the reaction benzoate + ATP + CoA = benzoyl-CoA + AMP + diphosphate. The enzyme catalyses (E)-cinnamate + ATP + CoA = (E)-cinnamoyl-CoA + AMP + diphosphate. It catalyses the reaction (E)-ferulate + ATP + CoA = (E)-feruloyl-CoA + AMP + diphosphate. It functions in the pathway phenylpropanoid metabolism; trans-cinnamate biosynthesis. The protein operates within phytoalexin biosynthesis; 3,4',5-trihydroxystilbene biosynthesis; 3,4',5-trihydroxystilbene from trans-4-coumarate: step 1/2. Catalyzes the formation of CoA esters of trans-cinnamic acid, 4-coumaric acid, ferulic acid, benzoic acid and caffeic acid. This chain is 4-coumarate:CoA ligase 1, found in Petunia hybrida (Petunia).